The primary structure comprises 271 residues: Mannosyl-3-phosphoglycerate phosphatase (271 aa).

The Nucleophile role is filled by D13. Residues D13, D15, and D214 each contribute to the Mg(2+) site.

Belongs to the HAD-like hydrolase superfamily. MPGP family. It depends on Mg(2+) as a cofactor.

It localises to the cytoplasm. The catalysed reaction is 2-O-(alpha-D-mannosyl)-3-phosphoglycerate + H2O = (2R)-2-O-(alpha-D-mannosyl)-glycerate + phosphate. The chain is Mannosyl-3-phosphoglycerate phosphatase from Escherichia coli O17:K52:H18 (strain UMN026 / ExPEC).